Reading from the N-terminus, the 22-residue chain is Cysteine protease inhibitor 4 (22 aa).

It belongs to the protease inhibitor I3 (leguminous Kunitz-type inhibitor) family. Tubers.

It localises to the vacuole. Functionally, inhibitor of papain (cysteine protease). Does not inhibit trypsin, chymotrypsin nor elastase (serine proteases). May protect the plant by inhibiting proteases of invading organisms. This Solanum tuberosum (Potato) protein is Cysteine protease inhibitor 4.